The primary structure comprises 385 residues: Aliphatic amidase expression-regulating protein (385 aa).

Homodimer. Forms a complex with AmiR.

Negatively regulates the expression of the aliphatic amidase operon. AmiC functions by inhibiting the action of AmiR at the protein level. It exhibits protein kinase activity. In Pseudomonas aeruginosa (strain ATCC 15692 / DSM 22644 / CIP 104116 / JCM 14847 / LMG 12228 / 1C / PRS 101 / PAO1), this protein is Aliphatic amidase expression-regulating protein (amiC).